Consider the following 143-residue polypeptide: D-aminoacyl-tRNA deacylase (143 aa).

Residues 135-136 (GP) carry the Gly-cisPro motif, important for rejection of L-amino acids motif.

The protein belongs to the DTD family. In terms of assembly, homodimer.

The protein resides in the cytoplasm. The enzyme catalyses glycyl-tRNA(Ala) + H2O = tRNA(Ala) + glycine + H(+). The catalysed reaction is a D-aminoacyl-tRNA + H2O = a tRNA + a D-alpha-amino acid + H(+). In terms of biological role, an aminoacyl-tRNA editing enzyme that deacylates mischarged D-aminoacyl-tRNAs. Also deacylates mischarged glycyl-tRNA(Ala), protecting cells against glycine mischarging by AlaRS. Acts via tRNA-based rather than protein-based catalysis; rejects L-amino acids rather than detecting D-amino acids in the active site. By recycling D-aminoacyl-tRNA to D-amino acids and free tRNA molecules, this enzyme counteracts the toxicity associated with the formation of D-aminoacyl-tRNA entities in vivo and helps enforce protein L-homochirality. In Mycolicibacterium paratuberculosis (strain ATCC BAA-968 / K-10) (Mycobacterium paratuberculosis), this protein is D-aminoacyl-tRNA deacylase.